Reading from the N-terminus, the 173-residue chain is T cell receptor gamma constant 1 (173 aa).

In terms of domain architecture, Ig-like spans 10-104 (PKPTIFLPSI…NKNGVDQEII (95 aa)). The cysteines at positions 32 and 88 are disulfide-linked. N-linked (GlcNAc...) asparagine glycosylation is found at Asn66, Asn120, Asn126, and Asn135. Residues 139–161 (YYMYLLLLLKSVVYFAIITCCLL) traverse the membrane as a helical segment.

Gamma-delta TR is a heterodimer composed of a gamma and delta chain; disulfide-linked. The gamma-delta TR is associated with the transmembrane signaling CD3 coreceptor proteins following the stoichiometry: a single gamma-delta TR heterodimer associates with one CD3D-CD3E heterodimer, one CD3G-CD3E heterodimer and one CD247 homodimer forming a stable octameric structure. Upon activation, gamma-delta TR complex associates with FCER1G to initiate intracellular signaling.

The protein resides in the cell membrane. Its function is as follows. Constant region of T cell receptor (TR) gamma chain that participates in the antigen recognition. Gamma-delta TRs recognize a variety of self and foreign non-peptide antigens frequently expressed at the epithelial boundaries between the host and external environment, including endogenous lipids presented by MH-like protein CD1D and phosphoantigens presented by butyrophilin-like molecule BTN3A1. Upon antigen recognition induces rapid, innate-like immune responses involved in pathogen clearance and tissue repair. Binding of gamma-delta TR complex to antigen triggers phosphorylation of immunoreceptor tyrosine-based activation motifs (ITAMs) in the CD3 chains by the LCK and FYN kinases, allowing the recruitment, phosphorylation, and activation of ZAP70 that facilitates phosphorylation of the scaffolding proteins LCP2 and LAT. This lead to the formation of a supramolecular signalosome that recruits the phospholipase PLCG1, resulting in calcium mobilization and ERK activation, ultimately leading to T cell expansion and differentiation into effector cells. Gamma-delta TRs are produced through somatic rearrangement of a limited repertoire of variable (V), diversity (D), and joining (J) genes. The potential diversity of gamma-delta TRs is conferred by the unique ability to rearrange (D) genes in tandem and to utilize all three reading frames. The combinatorial diversity is considerably increased by the sequence exonuclease trimming and random nucleotide (N) region additions which occur during the V-(D)-J rearrangements. The chain is T cell receptor gamma constant 1 from Homo sapiens (Human).